The primary structure comprises 236 residues: MNQDQLKQMVGEAARDEVLKLPAGQVLGVGTGSTANYFIDALALHKGHFAGTVSSSNATTERLLKHGFKVLDPNDVQGLPAYVDGADEIDPAGHMIKGGGGVLTGEKIIASMAKQFICICDSSKQVPVLGNFALPVEIIPLSQGVVSRELEKFGGRVTLRLAKHTRADLNQTPSEPFVTDNGGWILDVAGLRIASPAQMEAQINQIAGVITVGLFAKEKANILLVSNAAGVERIQF.

Substrate contacts are provided by residues 31–34 (TGST), 84–87 (DGAD), and 97–100 (KGGG). The Proton acceptor role is filled by Glu106. Lys124 provides a ligand contact to substrate.

This sequence belongs to the ribose 5-phosphate isomerase family. In terms of assembly, homodimer.

The enzyme catalyses aldehydo-D-ribose 5-phosphate = D-ribulose 5-phosphate. It participates in carbohydrate degradation; pentose phosphate pathway; D-ribose 5-phosphate from D-ribulose 5-phosphate (non-oxidative stage): step 1/1. In terms of biological role, catalyzes the reversible conversion of ribose-5-phosphate to ribulose 5-phosphate. The chain is Ribose-5-phosphate isomerase A from Polynucleobacter necessarius subsp. necessarius (strain STIR1).